We begin with the raw amino-acid sequence, 288 residues long: Energy-coupling factor transporter ATP-binding protein EcfA2 (288 aa).

An ABC transporter domain is found at 3-246; it reads IKLEQLGYCY…PDELVDLGLS (244 aa). 40-47 lines the ATP pocket; sequence GHTGSGKS.

Belongs to the ABC transporter superfamily. Energy-coupling factor EcfA family. Forms a stable energy-coupling factor (ECF) transporter complex composed of 2 membrane-embedded substrate-binding proteins (S component), 2 ATP-binding proteins (A component) and 2 transmembrane proteins (T component).

Its subcellular location is the cell membrane. Its function is as follows. ATP-binding (A) component of a common energy-coupling factor (ECF) ABC-transporter complex. Unlike classic ABC transporters this ECF transporter provides the energy necessary to transport a number of different substrates. In Listeria monocytogenes serovar 1/2a (strain ATCC BAA-679 / EGD-e), this protein is Energy-coupling factor transporter ATP-binding protein EcfA2.